Reading from the N-terminus, the 220-residue chain is Putative O-methyltransferase Mjls_4009 (220 aa).

S-adenosyl-L-methionine is bound by residues valine 47, glutamate 69, 71–72 (GT), serine 77, aspartate 95, and valine 96. Residue aspartate 143 participates in substrate binding. Position 145 (aspartate 145) interacts with S-adenosyl-L-methionine.

The protein belongs to the class I-like SAM-binding methyltransferase superfamily. Cation-dependent O-methyltransferase family.

In Mycobacterium sp. (strain JLS), this protein is Putative O-methyltransferase Mjls_4009.